The sequence spans 360 residues: Phospho-N-acetylmuramoyl-pentapeptide-transferase (360 aa).

10 helical membrane-spanning segments follow: residues 26–46, 72–92, 94–114, 132–152, 168–188, 199–219, 236–256, 263–283, 288–308, and 338–358; these read AIVS…RMIA, PTMG…LWAY, SNPY…IGFV, WKYF…YLAG, VMPQ…VGTG, GLAI…AWAT, AGEL…FLWF, VFMG…IAVL, FLLV…ILQV, and VIVR…ATLK.

The protein belongs to the glycosyltransferase 4 family. MraY subfamily. Mg(2+) serves as cofactor.

The protein resides in the cell inner membrane. It catalyses the reaction UDP-N-acetyl-alpha-D-muramoyl-L-alanyl-gamma-D-glutamyl-meso-2,6-diaminopimeloyl-D-alanyl-D-alanine + di-trans,octa-cis-undecaprenyl phosphate = di-trans,octa-cis-undecaprenyl diphospho-N-acetyl-alpha-D-muramoyl-L-alanyl-D-glutamyl-meso-2,6-diaminopimeloyl-D-alanyl-D-alanine + UMP. It functions in the pathway cell wall biogenesis; peptidoglycan biosynthesis. Functionally, catalyzes the initial step of the lipid cycle reactions in the biosynthesis of the cell wall peptidoglycan: transfers peptidoglycan precursor phospho-MurNAc-pentapeptide from UDP-MurNAc-pentapeptide onto the lipid carrier undecaprenyl phosphate, yielding undecaprenyl-pyrophosphoryl-MurNAc-pentapeptide, known as lipid I. In Citrobacter koseri (strain ATCC BAA-895 / CDC 4225-83 / SGSC4696), this protein is Phospho-N-acetylmuramoyl-pentapeptide-transferase.